The primary structure comprises 232 residues: Ubiquinone biosynthesis O-methyltransferase (232 aa).

Positions 36, 55, 76, and 120 each coordinate S-adenosyl-L-methionine.

This sequence belongs to the methyltransferase superfamily. UbiG/COQ3 family.

It catalyses the reaction a 3-demethylubiquinol + S-adenosyl-L-methionine = a ubiquinol + S-adenosyl-L-homocysteine + H(+). The enzyme catalyses a 3-(all-trans-polyprenyl)benzene-1,2-diol + S-adenosyl-L-methionine = a 2-methoxy-6-(all-trans-polyprenyl)phenol + S-adenosyl-L-homocysteine + H(+). Its pathway is cofactor biosynthesis; ubiquinone biosynthesis. Its function is as follows. O-methyltransferase that catalyzes the 2 O-methylation steps in the ubiquinone biosynthetic pathway. The polypeptide is Ubiquinone biosynthesis O-methyltransferase (Paraburkholderia xenovorans (strain LB400)).